A 704-amino-acid polypeptide reads, in one-letter code: Glycogen [starch] synthase, liver (704 aa).

Ser8 carries the post-translational modification Phosphoserine; by AMPK and PKA. Ser11 carries the phosphoserine modification. Lys40 contributes to the UDP binding site. His205 and Arg211 together coordinate UDP-alpha-D-glucose. Positions 291, 292, 294, 297, and 301 each coordinate alpha-D-glucose 6-phosphate. Arg331 lines the UDP pocket. Arg331 lines the UDP-alpha-D-glucose pocket. Residue His501 participates in alpha-D-glucose 6-phosphate binding. Residues Glu510, Trp512, and Gly513 each contribute to the UDP-alpha-D-glucose site. Thr515 serves as a coordination point for UDP. Alpha-D-glucose 6-phosphate-binding residues include Arg582 and Arg586. Residues 620-704 (KFHLEPTSPP…KKKLHGEYKN (85 aa)) are disordered. Residue Ser627 is modified to Phosphoserine. Phosphoserine; by GSK3-alpha and GSK3-beta is present on residues Ser641, Ser645, Ser649, and Ser653. Low complexity predominate over residues 647 to 657 (SGSQASSPQCS). Ser657 carries the post-translational modification Phosphoserine; by CK2. The segment covering 658 to 675 (DAEDEEDEDERYDEEEEA) has biased composition (acidic residues). Ser684 carries the phosphoserine modification.

This sequence belongs to the glycosyltransferase 3 family. Part of the glycogen synthase (GS)-glycogenin complex, a heterooctamer composed of a tetramer of GS and 2 dimers of glycogenin, where each GS protomer binds to one glycogenin subunit (via glycogenin C-terminus); the GS tetramer may dissociate from glycogenin dimers to continue glycogen polymerization on its own. May also form a heterooctamer complex with GYG1 (via GYG1 C-terminus). In terms of processing, phosphorylation reduces the activity towards UDP-alpha-D-glucose. Primed phosphorylation at Ser-657 (site 5) by CSNK2A1 and CSNK2A2 is required for inhibitory phosphorylation at Ser-641 (site 3a), Ser-645 (site 3b), Ser-649 (site 3c) and Ser-653 (site 4) by GSK3A an GSK3B. Dephosphorylation at Ser-641 and Ser-645 by PP1 activates the enzyme. Phosphorylation at Ser-8 is not required for interaction with GYG1. Interaction with GYG1 does not regulate the phosphorylation at Ser-8 and Ser-641. As to expression, specifically expressed in liver.

It catalyses the reaction [(1-&gt;4)-alpha-D-glucosyl](n) + UDP-alpha-D-glucose = [(1-&gt;4)-alpha-D-glucosyl](n+1) + UDP + H(+). The protein operates within glycan biosynthesis; glycogen biosynthesis. Its activity is regulated as follows. Allosteric activation by glucose-6-phosphate. Phosphorylation reduces the activity towards UDP-glucose. When in the non-phosphorylated state, glycogen synthase does not require glucose-6-phosphate as an allosteric activator; when phosphorylated it does. Functionally, glycogen synthase participates in the glycogen biosynthetic process along with glycogenin and glycogen branching enzyme. Extends the primer composed of a few glucose units formed by glycogenin by adding new glucose units to it. In this context, glycogen synthase transfers the glycosyl residue from UDP-Glc to the non-reducing end of alpha-1,4-glucan. The protein is Glycogen [starch] synthase, liver of Mus musculus (Mouse).